Consider the following 250-residue polypeptide: Cruxrhodopsin-1 (250 aa).

The Extracellular portion of the chain corresponds to 1-9; that stretch reads MPEPGSEAI. Residues 10–27 form a helical membrane-spanning segment; sequence WLWLGTAGMFLGMLYFIA. The Cytoplasmic portion of the chain corresponds to 28-41; sequence RGWGETDSRRQKFY. A helical transmembrane segment spans residues 42-60; sequence IATILITAIAFVNYLAMAL. At 61 to 77 the chain is on the extracellular side; the sequence is GFGLTIVEFAGEEHPIY. Residues 78–94 traverse the membrane as a helical segment; the sequence is WARYSDWLFTTPLLLYD. Topologically, residues 95–105 are cytoplasmic; sequence LGLLAGADRNT. The helical transmembrane segment at 106–125 threads the bilayer; the sequence is ITSLVSLDVLMIGTGLVATL. The Extracellular portion of the chain corresponds to 126 to 138; it reads SPGSGVLSAGAER. A helical transmembrane segment spans residues 139 to 158; that stretch reads LVWWGISTAFLLVLLYFLFS. At 159–176 the chain is on the cytoplasmic side; that stretch reads SLSGRVADLPSDTRSTFK. Residues 177 to 195 traverse the membrane as a helical segment; that stretch reads TLRNLVTVVWLVYPVWWLI. At 196 to 207 the chain is on the extracellular side; that stretch reads GTEGIGLVGIGI. The chain crosses the membrane as a helical span at residues 208 to 227; it reads ETAGFMVIDLTAKVGFGIIL. The residue at position 220 (Lys-220) is an N6-(retinylidene)lysine. Residues 228-250 lie on the Cytoplasmic side of the membrane; that stretch reads LRSHGVLDGAAETTGTGATPADD.

Belongs to the archaeal/bacterial/fungal opsin family. As to quaternary structure, homotrimer.

Its subcellular location is the cell membrane. In terms of biological role, light-driven proton pump. This is Cruxrhodopsin-1 (cop1) from Haloarcula argentinensis.